We begin with the raw amino-acid sequence, 129 residues long: 3-aminoacrylate deaminase RutC (129 aa).

This sequence belongs to the RutC family.

The enzyme catalyses (Z)-3-aminoacrylate + H2O + H(+) = 3-oxopropanoate + NH4(+). In terms of biological role, involved in pyrimidine catabolism. Catalyzes the deamination of 3-aminoacrylate to malonic semialdehyde, a reaction that can also occur spontaneously. RutC may facilitate the reaction and modulate the metabolic fitness, rather than catalyzing essential functions. This is 3-aminoacrylate deaminase RutC from Caulobacter sp. (strain K31).